The primary structure comprises 504 residues: Protein anon-37Cs (504 aa).

Low levels seen in adult heads, thorax, abdomen and ovaries, high levels in testes.

Its subcellular location is the cytoplasm. Functionally, has a non-vital function. This Drosophila melanogaster (Fruit fly) protein is Protein anon-37Cs (anon-37Cs).